Consider the following 96-residue polypeptide: Large ribosomal subunit protein uL23 (96 aa).

The protein belongs to the universal ribosomal protein uL23 family. In terms of assembly, part of the 50S ribosomal subunit. Contacts protein L29, and trigger factor when it is bound to the ribosome.

In terms of biological role, one of the early assembly proteins it binds 23S rRNA. One of the proteins that surrounds the polypeptide exit tunnel on the outside of the ribosome. Forms the main docking site for trigger factor binding to the ribosome. This Brevibacillus brevis (strain 47 / JCM 6285 / NBRC 100599) protein is Large ribosomal subunit protein uL23.